A 163-amino-acid chain; its full sequence is Cytochrome b6-f complex subunit 4 (163 aa).

3 helical membrane passes run 36-56 (LLYIFPVVILGTIACNVGLAV), 95-115 (LLGVLLMVSVPLGLLTVPFLE), and 131-151 (TVFLIGTAVALWLGIGATLPI).

Belongs to the cytochrome b family. PetD subfamily. In terms of assembly, the 4 large subunits of the cytochrome b6-f complex are cytochrome b6, subunit IV (17 kDa polypeptide, petD), cytochrome f and the Rieske protein, while the 4 small subunits are petG, petL, petM and petN. The complex functions as a dimer.

It is found in the plastid. Its subcellular location is the chloroplast thylakoid membrane. Component of the cytochrome b6-f complex, which mediates electron transfer between photosystem II (PSII) and photosystem I (PSI), cyclic electron flow around PSI, and state transitions. The sequence is that of Cytochrome b6-f complex subunit 4 from Phalaenopsis aphrodite subsp. formosana (Moth orchid).